Consider the following 166-residue polypeptide: Small ribosomal subunit protein bS6 (166 aa).

Composition is skewed to basic and acidic residues over residues 96–142 (HEEG…DRPP) and 149–166 (GGDR…GGAE). Residues 96-166 (HEEGPSAMMQ…PREGFEGGAE (71 aa)) are disordered.

Belongs to the bacterial ribosomal protein bS6 family.

Functionally, binds together with bS18 to 16S ribosomal RNA. The sequence is that of Small ribosomal subunit protein bS6 from Mesorhizobium japonicum (strain LMG 29417 / CECT 9101 / MAFF 303099) (Mesorhizobium loti (strain MAFF 303099)).